The primary structure comprises 395 residues: Chalcone synthase (395 aa).

N-acetylvaline is present on Val-2. Cys-169 is a catalytic residue.

The protein belongs to the thiolase-like superfamily. Chalcone/stilbene synthases family.

The catalysed reaction is (E)-4-coumaroyl-CoA + 3 malonyl-CoA + 3 H(+) = 2',4,4',6'-tetrahydroxychalcone + 3 CO2 + 4 CoA. The protein operates within secondary metabolite biosynthesis; flavonoid biosynthesis. The primary product of this enzyme is 4,2',4',6'-tetrahydroxychalcone (also termed naringenin-chalcone or chalcone) which can under specific conditions spontaneously isomerize into naringenin. This Cardamine amara (Large bitter-cress) protein is Chalcone synthase (CHS).